The following is a 247-amino-acid chain: MADS-box protein defh21 (247 aa).

In terms of domain architecture, MADS-box spans M1–P61. Residues N91 to Q183 enclose the K-box domain.

Expressed exclusively in a few inner cell layers of the inner integuments of the ovules.

It localises to the nucleus. Its function is as follows. Probable transcription factor. This is MADS-box protein defh21 (DEFH21) from Antirrhinum majus (Garden snapdragon).